Consider the following 169-residue polypeptide: FAM231A/C-like protein LOC102723383 (169 aa).

Residues 82–140 form a disordered region; that stretch reads LIRSGSSQNESQEDQGAGLISQAGLKADNRRESSTWANEVEDRRPQCTPALNLTPSHPH.

Belongs to the FAM231 family.

The protein is FAM231A/C-like protein LOC102723383 of Homo sapiens (Human).